The chain runs to 463 residues: FAD-dependent monooxygenase nodM (463 aa).

The helical transmembrane segment at 5 to 25 (EFKVIIVGGSLAGLTLAHCLL) threads the bilayer. The FAD site is built by E35, G49, R108, D305, and A318. A helical membrane pass occupies residues 438–458 (ILLGFTGVFTSALAMVVLLHI).

This sequence belongs to the paxM FAD-dependent monooxygenase family. Requires FAD as cofactor.

It localises to the membrane. It functions in the pathway secondary metabolite biosynthesis. In terms of biological role, FAD-dependent monooxygenase; part of the gene cluster that mediates the biosynthesis of the indole diterpenes nodulisporic acids (NA). Nodulisporic acid A (NAA) and its chemically modified derivatives are of particular significance because of their highly potent insecticidal activity against blood-feeding arthropods and lack of observable adverse effects on mammals, in particular the tremogenicity associated with the paspaline-derived IDTs is not observed. The geranylgeranyl diphosphate (GGPP) synthase ggs1, localized outside of the cluster, is proposed to catalyze the first step in nodulisporic acid biosynthesis via conversion of farnesyl pyrophosphate and isopentyl pyrophosphate into geranylgeranyl pyrophosphate (GGPP). Condensation of indole-3-glycerol phosphate with GGPP by the prenyl transferase nodC then forms 3-geranylgeranylindole (3-GGI). Epoxidation by the FAD-dependent monooxygenase nodM leads to a single-epoxidized-GGI that is substrate of the terpene cyclase nodB for cyclization to yield emindole SB. The terminal methyl carbon, C28, of emindole SB is then oxidized by the cytochrome P450 monooxygenase nodW to produce nodulisporic acid F (NAF), the pentacyclic core of NAA. NAF is converted to nodulisporic acid E (NAE) via prenylation. This step is probably performed by one of the indole diterpene prenyltransferases nodD1 or nodD2. Several oxidation steps performed by the FAD-linked oxidoreductase nodO and one of the cytochrome P450 monooxygenase nodR, nodX or nodZ further convert NAE to nodulisporic acid D (NAD). NAD is substrate of cytochrome P450 monooxygenase nodJ to produce the precursor of nodulisporic acid C (NAC), converted to NAC by one of the indole diterpene prenyltransferases nodD1 or nodD2. The FAD-dependent monooxygenase nodY2 then oxidizes NAC to nodulisporic acid B (NAB). Finally NAB is converted to NAA by one of the cytochrome P450 monooxygenases nodR, nodX or nodZ. This Hypoxylon pulicicidum protein is FAD-dependent monooxygenase nodM.